The following is a 442-amino-acid chain: UDP-N-acetylmuramoylalanine--D-glutamate ligase (442 aa).

This sequence belongs to the MurCDEF family.

Its subcellular location is the cytoplasm. It catalyses the reaction UDP-N-acetyl-alpha-D-muramoyl-L-alanine + D-glutamate + ATP = UDP-N-acetyl-alpha-D-muramoyl-L-alanyl-D-glutamate + ADP + phosphate + H(+). The protein operates within cell wall biogenesis; peptidoglycan biosynthesis. Its function is as follows. Cell wall formation. Catalyzes the addition of glutamate to the nucleotide precursor UDP-N-acetylmuramoyl-L-alanine (UMA). This chain is UDP-N-acetylmuramoylalanine--D-glutamate ligase, found in Buchnera aphidicola subsp. Baizongia pistaciae (strain Bp).